Reading from the N-terminus, the 538-residue chain is uncharacterized protein (538 aa).

An N-terminal signal peptide occupies residues 1–17; sequence MSFSATILFSPPSGSEA. A disordered region spans residues 101 to 131; the sequence is RQGKVSIPDEDGESRAHSSPPEEPGPLKESP. Residues lysine 128 and lysine 221 each participate in a glycyl lysine isopeptide (Lys-Gly) (interchain with G-Cter in SUMO2) cross-link. Serine 224 bears the Phosphoserine mark. Residues 233–253 are disordered; sequence RATPETGPENGTKLPPPRPED. Phosphoserine is present on residues serine 285 and serine 428. Residues 488-523 are disordered; that stretch reads LPPELYNPNFQEEEDEGGDENAPGSPSFDQPHKTCC.

It is found in the secreted. This is an uncharacterized protein from Homo sapiens (Human).